We begin with the raw amino-acid sequence, 510 residues long: ATP synthase subunit alpha (510 aa).

169-176 (GDRQTGKT) contacts ATP.

Belongs to the ATPase alpha/beta chains family. As to quaternary structure, F-type ATPases have 2 components, CF(1) - the catalytic core - and CF(0) - the membrane proton channel. CF(1) has five subunits: alpha(3), beta(3), gamma(1), delta(1), epsilon(1). CF(0) has three main subunits: a(1), b(2) and c(9-12). The alpha and beta chains form an alternating ring which encloses part of the gamma chain. CF(1) is attached to CF(0) by a central stalk formed by the gamma and epsilon chains, while a peripheral stalk is formed by the delta and b chains.

Its subcellular location is the cell inner membrane. The catalysed reaction is ATP + H2O + 4 H(+)(in) = ADP + phosphate + 5 H(+)(out). Functionally, produces ATP from ADP in the presence of a proton gradient across the membrane. The alpha chain is a regulatory subunit. This chain is ATP synthase subunit alpha, found in Anaeromyxobacter dehalogenans (strain 2CP-C).